A 122-amino-acid chain; its full sequence is Large ribosomal subunit protein uL14 (122 aa).

The protein belongs to the universal ribosomal protein uL14 family. Part of the 50S ribosomal subunit. Forms a cluster with proteins L3 and L19. In the 70S ribosome, L14 and L19 interact and together make contacts with the 16S rRNA in bridges B5 and B8.

In terms of biological role, binds to 23S rRNA. Forms part of two intersubunit bridges in the 70S ribosome. This chain is Large ribosomal subunit protein uL14, found in Methylococcus capsulatus (strain ATCC 33009 / NCIMB 11132 / Bath).